Here is a 128-residue protein sequence, read N- to C-terminus: Secreted RxLR effector protein RXLR-C09 (128 aa).

An N-terminal signal peptide occupies residues 1–22; sequence MRFCLVFIRLAAFVILSGGATS. The RxLR-dEER motif lies at 58-75; that stretch reads RLLRLNDQADISGHDEER.

This sequence belongs to the RxLR effector family.

The protein localises to the secreted. Its subcellular location is the host cell membrane. The protein resides in the host nucleus. In terms of biological role, secreted effector that suppresses pattern-triggered immunity (PTI) in plant host. The protein is Secreted RxLR effector protein RXLR-C09 of Plasmopara halstedii (Downy mildew of sunflower).